Consider the following 344-residue polypeptide: N-acetyl-gamma-glutamyl-phosphate reductase (344 aa).

The active site involves C150.

The protein belongs to the NAGSA dehydrogenase family. Type 1 subfamily.

It localises to the cytoplasm. It catalyses the reaction N-acetyl-L-glutamate 5-semialdehyde + phosphate + NADP(+) = N-acetyl-L-glutamyl 5-phosphate + NADPH + H(+). The protein operates within amino-acid biosynthesis; L-arginine biosynthesis; N(2)-acetyl-L-ornithine from L-glutamate: step 3/4. Catalyzes the NADPH-dependent reduction of N-acetyl-5-glutamyl phosphate to yield N-acetyl-L-glutamate 5-semialdehyde. The polypeptide is N-acetyl-gamma-glutamyl-phosphate reductase (Pseudomonas paraeruginosa (strain DSM 24068 / PA7) (Pseudomonas aeruginosa (strain PA7))).